Reading from the N-terminus, the 492-residue chain is MATKPTEPVTILSLRKLSLGTAEPQVKEPKTFTVEDAVETIGFGRFHIALFLIMGSTGVVEAMEIMLIAVVSPVIRCEWQLENWQVALVTTMVFFGYMVFSILFGLLADRYGRWKILLISFLWGAYFSLLTSFAPSYIWFVFLRTMVGCGVSGHSQGLIIKTEFLPTKYRGYMLPLSQVFWLAGSLLIIGLASVIIPTIGWRWLIRVASIPGIILIVAFKFIPESARFNVSTGNTRAALATLERVAKMNRSVMPEGKLVEPVLEKRGRFADLLDAKYLRTTLQIWVIWLGISFAYYGVILASAELLERDLVCGSKSDSAVVVTGGDSGESQSPCYCHMFAPSDYRTMIISTIGEIALNPLNILGINFLGRRLSLSITMGCTALFFLLLNICTSSAGLIGFLFMLRALVAANFNTVYIYTAEVYPTTMRALGMGTSGSLCRIGAMVAPFISQVLMSASILGALCLFSSVCVVCAISAFTLPIETKGRALQQIK.

The next 10 helical transmembrane spans lie at 48 to 68 (IALF…IMLI), 86 to 106 (VALV…LFGL), 121 to 141 (FLWG…IWFV), 179 to 199 (VFWL…IPTI), 203 to 223 (WLIR…KFIP), 281 to 301 (TLQI…VILA), 348 to 368 (IIST…INFL), 383 to 403 (LFFL…FLFM), 429 to 449 (ALGM…APFI), and 458 to 478 (ILGA…SAFT).

It belongs to the major facilitator superfamily.

It localises to the membrane. This chain is Putative transporter SVOPL (SVOPL), found in Homo sapiens (Human).